Reading from the N-terminus, the 406-residue chain is MAPARCFSARLRTVFQGVGHWALSTWAGLKPSRLLPQRASPRLLSVGRADLAKHQELPGKKLLSEKKLKRYFVDYRRVLVCGGNGGAGASCFHSEPRKEFGGPDGGDGGNGGHVILRVDQQVKSLSSVLSRYQGFSGEDGGSKNCFGRSGAVLYIRVPVGTLVKEGGRVVADLSCVGDEYIAALGGAGGKGNRFFLANNNRAPVTCTPGQPGQQRVLHLELKTVAHAGMVGFPNAGKSSLLRAISNARPAVASYPFTTLKPHVGIVHYEGHLQIAVADIPGIIRGAHQNRGLGSAFLRHIERCRFLLFVVDLSQPEPWTQVDDLKYELEMYEKGLSARPHAIVANKIDLPEAQANLSQLRDHLGQEVIVLSALTGENLEQLLLHLKVLYDAYAEAELGQGRQPLRW.

A localized in the mitochondria region spans residues 15–406 (FQGVGHWALS…LGQGRQPLRW (392 aa)). A not localized in the mitochondria region spans residues 30-406 (KPSRLLPQRA…LGQGRQPLRW (377 aa)). In terms of domain architecture, Obg spans 70 to 224 (RYFVDYRRVL…RVLHLELKTV (155 aa)). The region spanning 225–390 (AHAGMVGFPN…LLLHLKVLYD (166 aa)) is the OBG-type G domain. GTP-binding positions include 231–238 (GFPNAGKS), 256–260 (FTTLK), 278–281 (DIPG), 345–348 (NKID), and 371–373 (SAL). 2 residues coordinate Mg(2+): serine 238 and threonine 258.

This sequence belongs to the TRAFAC class OBG-HflX-like GTPase superfamily. OBG GTPase family. As to quaternary structure, associates with the mitochondrial ribosome large subunit; the association occurs in a GTP-dependent manner. It depends on Mg(2+) as a cofactor.

Its subcellular location is the mitochondrion. The protein resides in the mitochondrion inner membrane. In terms of biological role, plays a role in the regulation of the mitochondrial ribosome assembly and of translational activity. Displays GTPase activity. Involved in the ribosome maturation process. The protein is Mitochondrial ribosome-associated GTPase 2 (MTG2) of Homo sapiens (Human).